The primary structure comprises 234 residues: Biosynthetic peptidoglycan transglycosylase (234 aa).

The helical transmembrane segment at 8–28 threads the bilayer; sequence VIGCFAAGVVALNLYFFAAIA.

Belongs to the glycosyltransferase 51 family.

The protein resides in the cell inner membrane. It catalyses the reaction [GlcNAc-(1-&gt;4)-Mur2Ac(oyl-L-Ala-gamma-D-Glu-L-Lys-D-Ala-D-Ala)](n)-di-trans,octa-cis-undecaprenyl diphosphate + beta-D-GlcNAc-(1-&gt;4)-Mur2Ac(oyl-L-Ala-gamma-D-Glu-L-Lys-D-Ala-D-Ala)-di-trans,octa-cis-undecaprenyl diphosphate = [GlcNAc-(1-&gt;4)-Mur2Ac(oyl-L-Ala-gamma-D-Glu-L-Lys-D-Ala-D-Ala)](n+1)-di-trans,octa-cis-undecaprenyl diphosphate + di-trans,octa-cis-undecaprenyl diphosphate + H(+). Its pathway is cell wall biogenesis; peptidoglycan biosynthesis. Functionally, peptidoglycan polymerase that catalyzes glycan chain elongation from lipid-linked precursors. This chain is Biosynthetic peptidoglycan transglycosylase, found in Ralstonia nicotianae (strain ATCC BAA-1114 / GMI1000) (Ralstonia solanacearum).